We begin with the raw amino-acid sequence, 197 residues long: Viral polyamine acetyltransferase (197 aa).

Asparagine 22 serves as a coordination point for acetyl-CoA. Residue glutamate 27 is part of the active site. In terms of domain architecture, N-acetyltransferase spans 102-182; it reads SYTPDDKCLY…YQYGITKPFD (81 aa). Residues isoleucine 115, serine 117, glycine 121, glycine 123, alanine 125, threonine 126, threonine 149, asparagine 150, and lysine 159 each contribute to the acetyl-CoA site.

This sequence belongs to the acetyltransferase family.

It catalyses the reaction spermine + acetyl-CoA = N(1)-acetylspermine + CoA + H(+). The enzyme catalyses spermidine + acetyl-CoA = N(1)-acetylspermidine + CoA + H(+). The catalysed reaction is spermidine + acetyl-CoA = N(8)-acetylspermidine + CoA + H(+). It carries out the reaction putrescine + acetyl-CoA = N-acetylputrescine + CoA + H(+). It catalyses the reaction cadaverine + acetyl-CoA = N-acetylcadaverine + CoA + H(+). The enzyme catalyses sym-homospermidine + acetyl-CoA = N(1)-acetyl-sym-homospermidine + CoA + H(+). In terms of biological role, acetylates polyamines such as spermine, spermidine, cadaverine, homospermidine and putrescine (the latter with low efficiency). May play a role in the regulation of polyamine catabolism in the host during viral replication. The protein is Viral polyamine acetyltransferase of Chlorella (PBCV-1).